A 495-amino-acid polypeptide reads, in one-letter code: Dipeptide and tripeptide permease B (495 aa).

The Cytoplasmic portion of the chain corresponds to 1-16; the sequence is MDNKVSILNQPKPFKM. A helical membrane pass occupies residues 17-37; it reads IFFIELWERFGYYGLQGILAV. At 38–50 the chain is on the periplasmic side; sequence YFVDKLGFSMQDS. A helical transmembrane segment spans residues 51-71; that stretch reads FVTFGAFAALVYGLVSVGGYV. Over 72–80 the chain is Cytoplasmic; it reads GDYVLGTKR. Residues 81 to 101 traverse the membrane as a helical segment; the sequence is TMVFGAVVLALGYFLMGFSIL. Residues 102-104 lie on the Periplasmic side of the membrane; that stretch reads NPN. A helical membrane pass occupies residues 105 to 125; that stretch reads FIYVALGAIAVGNGLFKANPS. At 126–144 the chain is on the cytoplasmic side; it reads SLLAKCYEKGDSRLDGAFT. The helical transmembrane segment at 145–165 threads the bilayer; that stretch reads LYYMSINIGSLVSLSISPVIA. The Periplasmic segment spans residues 166–170; sequence NNYGY. A helical transmembrane segment spans residues 171 to 191; the sequence is EYAFIICGLGLIASLFSYFSL. At 192–209 the chain is on the cytoplasmic side; it reads RSTVQGIGSEPDALPLNK. The chain crosses the membrane as a helical span at residues 210–230; that stretch reads TKALIVLIGTIASTLVCAWLL. Position 231 (Q231) is a topological domain, periplasmic. Residues 232 to 252 traverse the membrane as a helical segment; that stretch reads NIMMANLALGLIGVGVVGFFL. Over 253–265 the chain is Cytoplasmic; sequence KETFKEVGEQRNK. Residues 266–286 traverse the membrane as a helical segment; that stretch reads MIVAFILMLQAIIFYVLYAQM. Residues 287–309 lie on the Periplasmic side of the membrane; sequence PTSLNFFAINNVHSELFGMDINP. The helical transmembrane segment at 310–330 threads the bilayer; that stretch reads VSLQALNPFWVIFCSPILAYL. Topologically, residues 331–348 are cytoplasmic; it reads YTYYGNQNKDLSMPGKFT. Residues 349–369 form a helical membrane-spanning segment; that stretch reads VGMFMCAFGFLSVAAAGNWFA. Over 370–373 the chain is Periplasmic; it reads DQAG. Residues 374 to 394 form a helical membrane-spanning segment; sequence MVSVWWMVLVYLFQSLGELMI. At 395-409 the chain is on the cytoplasmic side; the sequence is SGLGLAMVASLVPQR. Residues 410 to 430 traverse the membrane as a helical segment; the sequence is LMGFTMGAWFLTQAASFIIGG. The Periplasmic portion of the chain corresponds to 431–454; that stretch reads YVATFSATPEHLTDPLDTLPVYTE. Residues 455–475 traverse the membrane as a helical segment; the sequence is LFQNIGFVTLAVAIVMAITAP. At 476–495 the chain is on the cytoplasmic side; sequence KLNKMMTSSQPEDAELVEQP.

The protein belongs to the major facilitator superfamily. Proton-dependent oligopeptide transporter (POT/PTR) (TC 2.A.17) family. DtpB subfamily.

The protein localises to the cell inner membrane. Proton-dependent permease that transports di- and tripeptides. The sequence is that of Dipeptide and tripeptide permease B from Aliivibrio fischeri (strain MJ11) (Vibrio fischeri).